The chain runs to 240 residues: Uridylate kinase (240 aa).

An ATP-binding site is contributed by 12–15 (KLSG). The segment at 20-25 (GEQGFG) is involved in allosteric activation by GTP. Gly54 serves as a coordination point for UMP. Gly55 and Arg59 together coordinate ATP. UMP is bound by residues Asp74 and 135 to 142 (TGNPYFST). The ATP site is built by Asn163, Tyr169, and Asp172.

The protein belongs to the UMP kinase family. As to quaternary structure, homohexamer.

It localises to the cytoplasm. The enzyme catalyses UMP + ATP = UDP + ADP. It functions in the pathway pyrimidine metabolism; CTP biosynthesis via de novo pathway; UDP from UMP (UMPK route): step 1/1. Allosterically activated by GTP. Inhibited by UTP. In terms of biological role, catalyzes the reversible phosphorylation of UMP to UDP. This Bacillus anthracis protein is Uridylate kinase.